The chain runs to 313 residues: Ribosomal RNA small subunit methyltransferase H (313 aa).

Residues 35 to 37 (GGH), aspartate 55, phenylalanine 79, aspartate 101, and glutamine 108 each bind S-adenosyl-L-methionine.

Belongs to the methyltransferase superfamily. RsmH family.

The protein localises to the cytoplasm. The catalysed reaction is cytidine(1402) in 16S rRNA + S-adenosyl-L-methionine = N(4)-methylcytidine(1402) in 16S rRNA + S-adenosyl-L-homocysteine + H(+). Its function is as follows. Specifically methylates the N4 position of cytidine in position 1402 (C1402) of 16S rRNA. This chain is Ribosomal RNA small subunit methyltransferase H, found in Escherichia coli O6:H1 (strain CFT073 / ATCC 700928 / UPEC).